The chain runs to 1021 residues: Sodium/potassium-transporting ATPase subunit alpha-1 (1021 aa).

A propeptide spanning residues 1–5 (MGKGV) is cleaved from the precursor. Over residues 1–11 (MGKGVGRDKYE) the composition is skewed to basic and acidic residues. Positions 1 to 36 (MGKGVGRDKYEPAAVSEHGDKKKAKKERDMDELKKE) are disordered. Over 6–85 (GRDKYEPAAV…NALTPPPTTP (80 aa)) the chain is Cytoplasmic. Position 9 is an N6-acetyllysine (lysine 9). At tyrosine 10 the chain carries Phosphotyrosine. The residue at position 16 (serine 16) is a Phosphoserine; by PKC. Position 21 is an N6-acetyllysine (lysine 21). The segment covering 26-36 (KERDMDELKKE) has biased composition (basic and acidic residues). Residues serine 38 and serine 45 each carry the phosphoserine modification. Positions 80–82 (PPP) are phosphoinositide-3 kinase binding. A helical membrane pass occupies residues 86–106 (EWVKFCRQLFGGFSMLLWIGA). The Extracellular portion of the chain corresponds to 107–129 (VLCFLAYGIQAATEEEPQNDNLY). A helical transmembrane segment spans residues 130 to 150 (LGVVLSAVVIITGCFSYYQEA). Topologically, residues 151 to 286 (KSSKIMESFK…GGQTPIAAEI (136 aa)) are cytoplasmic. A Phosphoserine modification is found at serine 226. A Phosphotyrosine modification is found at tyrosine 258. The chain crosses the membrane as a helical span at residues 287-306 (EHFIHIITGVAVFLGVSFFI). The Extracellular segment spans residues 307-318 (LSLILEYTWLEA). Residues 319-336 (VIFLIGIIVANVPEGLLA) form a helical membrane-spanning segment. Residues 337–770 (TVTVCLTLTA…EEGRLIFDNL (434 aa)) lie on the Cytoplasmic side of the membrane. Residue aspartate 374 is the 4-aspartylphosphate intermediate of the active site. 2 positions are modified to phosphoserine: serine 450 and serine 482. Residue lysine 485 coordinates ATP. Tyrosine 540 is subject to Phosphotyrosine. Positions 594 to 715 (RAAVPDAVGK…QGAIVAVTGD (122 aa)) are mediates interaction with SCN7A. Phosphoserine is present on serine 666. Residues aspartate 715 and aspartate 719 each coordinate Mg(2+). Residues 771 to 790 (KKSIAYTLTSNIPEITPFLI) form a helical membrane-spanning segment. Residues 791–800 (FIIANIPLPL) lie on the Extracellular side of the membrane. The chain crosses the membrane as a helical span at residues 801–821 (GTVTILCIDLGTDMVPAISLA). Topologically, residues 822 to 841 (YEQAESDIMKRQPRNPQTDK) are cytoplasmic. The helical transmembrane segment at 842–864 (LVNERLISMAYGQIGMIQALGGF) threads the bilayer. At 865–916 (FTYFVIMAENGFLPNHLLGIRVTWDDRWINDVEDSYGQQWTYEQRKIVEFTC) the chain is on the extracellular side. Residues 917 to 936 (HTAFFVSIVVVQWADLVICK) traverse the membrane as a helical segment. Topologically, residues 937–949 (TRRNSVFQQGMKN) are cytoplasmic. The residue at position 941 (serine 941) is a Phosphoserine; by PKA. Residues 950–968 (KILIFGLFEETALAAFLSY) form a helical membrane-spanning segment. The Extracellular segment spans residues 969-983 (CPGMGVALRMYPLKP). Residues 984-1004 (TWWFCAFPYSLLIFVYDEVRK) traverse the membrane as a helical segment. The Cytoplasmic segment spans residues 1005-1021 (LIIRRRPGGWVEKETYY).

Belongs to the cation transport ATPase (P-type) (TC 3.A.3) family. Type IIC subfamily. In terms of assembly, the sodium/potassium-transporting ATPase is composed of a catalytic alpha subunit, an auxiliary non-catalytic beta subunit and an additional regulatory subunit. Interacts with regulatory subunit FXYD1. Interacts with regulatory subunit FXYD3. Interacts with SIK1. Interacts with SLC35G1 and STIM1. Interacts with CLN3; this interaction regulates the sodium/potassium-transporting ATPase complex localization at the plasma membrane. Interacts with SCN7A; activates ATP1A1 P-type sodium:potassium-exchanging transporter activity which indirectly signals to nearby neurons to regulate sodium homeostasis. Phosphorylation on Tyr-10 modulates pumping activity. Phosphorylation of Ser-941 by PKA modulates the response of ATP1A1 to PKC. Dephosphorylation by protein phosphatase 2A (PP2A) following increases in intracellular sodium, leading to increase catalytic activity.

It localises to the cell membrane. Its subcellular location is the basolateral cell membrane. It is found in the sarcolemma. The protein resides in the cell projection. The protein localises to the axon. It localises to the melanosome. The catalysed reaction is K(+)(out) + Na(+)(in) + ATP + H2O = K(+)(in) + Na(+)(out) + ADP + phosphate + H(+). This is the catalytic component of the active enzyme, which catalyzes the hydrolysis of ATP coupled with the exchange of sodium and potassium ions across the plasma membrane. This action creates the electrochemical gradient of sodium and potassium ions, providing the energy for active transport of various nutrients. Could also be part of an osmosensory signaling pathway that senses body-fluid sodium levels and controls salt intake behavior as well as voluntary water intake to regulate sodium homeostasis. In Bos taurus (Bovine), this protein is Sodium/potassium-transporting ATPase subunit alpha-1 (ATP1A1).